Reading from the N-terminus, the 367-residue chain is Bi-functional coumaroyl CoA and feruloyl CoA ortho-hydroxylase Diox4 (367 aa).

A Fe2OG dioxygenase domain is found at 207 to 317 (IREPMLVGSR…RISVPLFVNP (111 aa)). Tyrosine 223 provides a ligand contact to 2-oxoglutarate. Positions 238, 240, and 298 each coordinate Fe cation. The 2-oxoglutarate site is built by arginine 308 and serine 310.

Belongs to the iron/ascorbate-dependent oxidoreductase family. Requires L-ascorbate as cofactor. The cofactor is Fe(2+).

It catalyses the reaction (E)-4-coumaroyl-CoA + 2-oxoglutarate + O2 = (E)-2,4-dihydroxycinnamoyl-CoA + succinate + CO2. The enzyme catalyses (E)-feruloyl-CoA + 2-oxoglutarate + O2 = (E)-6-hydroxyferuloyl-CoA + succinate + CO2. It functions in the pathway phenylpropanoid metabolism. Repressed by the competitive inhibitor psoralen, but not by umbelliferone, xanthotoxin, bergapten and isopimpinellin. Functionally, 2-oxoglutarate (OG)- and Fe(II)-dependent dioxygenase (2OGD) involved in scopoletin and umbelliferone biosynthesis. Converts feruloyl CoA into 6'-hydroxyferuloyl CoA, and p-coumaroyl CoA into 2,4-dihydroxycinnamoyl-CoA. Has no activity with cinnamic acid, caffeic acid, p-coumaric acid, ferulic acid, cinnamoyl-CoA and caffeoyl-CoA. The polypeptide is Bi-functional coumaroyl CoA and feruloyl CoA ortho-hydroxylase Diox4 (Ruta graveolens (Common rue)).